A 273-amino-acid chain; its full sequence is MQLKKTQSEIKDIWKNREKFNDCNLKKTARIAIKEVIELLDSGKIRVAEKLSSGEWVVHKWIKQAILLHFLTEENKIIDNTNCWFDKIGNKFSEWNEEKFRRLKIRAVPGCFVRRSAYIGTNVVLMPSFINVGAYVDSGTMIDTWSTIGSCAQIGKNCHISGGVGIGGVLEPIQASPVIIEDNCFIGARSEVAEGVVVREGSVLGIGVFIGASTKIIDRETSKVFYGEVPPYSVVVPGSIPSKNNISTYCAVIVKKVDEKTRSKISINEILRD.

Substrate contacts are provided by arginine 106 and aspartate 143.

The protein belongs to the transferase hexapeptide repeat family. Homotrimer.

Its subcellular location is the cytoplasm. It catalyses the reaction (S)-2,3,4,5-tetrahydrodipicolinate + succinyl-CoA + H2O = (S)-2-succinylamino-6-oxoheptanedioate + CoA. The protein operates within amino-acid biosynthesis; L-lysine biosynthesis via DAP pathway; LL-2,6-diaminopimelate from (S)-tetrahydrodipicolinate (succinylase route): step 1/3. The sequence is that of 2,3,4,5-tetrahydropyridine-2,6-dicarboxylate N-succinyltransferase from Wolbachia pipientis wMel.